Consider the following 178-residue polypeptide: Hypoxanthine phosphoribosyltransferase (178 aa).

Residues arginine 43 and glycine 44 each contribute to the diphosphate site. Residue glutamate 99 participates in GMP binding. Glutamate 99 is a binding site for IMP. Positions 99 and 100 each coordinate Mg(2+). The active-site Proton acceptor is aspartate 103. GMP is bound by residues 103 to 108, lysine 131, and aspartate 159; that span reads DSGNTL. IMP contacts are provided by residues 103–108 and lysine 131; that span reads DSGNTL. Position 165 (arginine 165) interacts with diphosphate.

The protein belongs to the purine/pyrimidine phosphoribosyltransferase family. Homotetramer. Mg(2+) is required as a cofactor.

It is found in the cytoplasm. The catalysed reaction is IMP + diphosphate = hypoxanthine + 5-phospho-alpha-D-ribose 1-diphosphate. It catalyses the reaction GMP + diphosphate = guanine + 5-phospho-alpha-D-ribose 1-diphosphate. Its pathway is purine metabolism; IMP biosynthesis via salvage pathway; IMP from hypoxanthine: step 1/1. In terms of biological role, purine salvage pathway enzyme which catalyzes the transfer of the ribosyl-5-phosphate group from 5-phospho-alpha-D-ribose 1-diphosphate (PRPP) to the N9 position of hypoxanthine to yield IMP (inosine 5'-monophosphate). To a lesser extent, can also act on guanine leading to GMP, but shows a highly less efficient activity with xanthine. This chain is Hypoxanthine phosphoribosyltransferase (hpt), found in Shigella flexneri.